The primary structure comprises 1423 residues: Protein phosphatase Slingshot homolog 2 (1423 aa).

Residues 1–37 (MALVTVQRSPTPSTTSSPCASEADSGEEECRSQPRSI) form a disordered region. Residues 9–18 (SPTPSTTSSP) are compositionally biased toward low complexity. Phosphoserine occurs at positions 17, 25, and 36. The DEK-C domain maps to 248 to 303 (ERTERLIKTKLREIMMQKDLENITSKEIRTELEMQMVCNLREFKEFIDNEMIVILG). The region spanning 307–448 (SPTQIFEHVF…LEEYQGILLA (142 aa)) is the Tyrosine-protein phosphatase domain. Cys392 acts as the Phosphocysteine intermediate in catalysis. 5 positions are modified to phosphoserine: Ser461, Ser487, Ser534, Ser631, and Ser633. Disordered regions lie at residues 617–641 (TSPL…CQTE), 664–684 (QETR…GGRN), 696–728 (PSKV…QSKA), 797–825 (ENKP…MCNP), 840–862 (EGEP…AKWY), 877–954 (LRQE…NATV), 962–981 (FDHL…TQQE), 1019–1041 (TSPN…EQGL), 1070–1108 (SLHP…SSLS), and 1144–1179 (TEQS…YKDS). Residues 621-635 (KDPPMSPDPESPSPQ) are compositionally biased toward pro residues. Positions 664 to 680 (QETRSRSFSHSRMEELG) are enriched in basic and acidic residues. Positions 889–904 (TCTSLSTRKNSKNDSS) are enriched in polar residues. A compositionally biased stretch (basic and acidic residues) spans 910–932 (PKGKSDEAPPEHSFVLKEPEMSK). The segment covering 941–953 (EAGSLSHSEQNAT) has biased composition (polar residues). Residues 1019-1034 (TSPNHTGPGSEIATSE) are compositionally biased toward polar residues. Polar residues predominate over residues 1144–1172 (TEQSSTTDEPSAEQVSWEESQESPLSSGS). Ser1217 is subject to Phosphoserine. Thr1422 is subject to Phosphothreonine.

Belongs to the protein-tyrosine phosphatase family. In terms of assembly, interacts with filamentous actin.

Its subcellular location is the cytoplasm. It is found in the cytoskeleton. The protein resides in the cell junction. The protein localises to the focal adhesion. It localises to the cytoplasmic vesicle. Its subcellular location is the secretory vesicle. It is found in the acrosome. It catalyses the reaction O-phospho-L-tyrosyl-[protein] + H2O = L-tyrosyl-[protein] + phosphate. It carries out the reaction O-phospho-L-seryl-[protein] + H2O = L-seryl-[protein] + phosphate. The enzyme catalyses O-phospho-L-threonyl-[protein] + H2O = L-threonyl-[protein] + phosphate. Its function is as follows. Protein phosphatase which regulates actin filament dynamics. Dephosphorylates and activates the actin binding/depolymerizing factor cofilin, which subsequently binds to actin filaments and stimulates their disassembly. Inhibitory phosphorylation of cofilin is mediated by LIMK1, which may also be dephosphorylated and inactivated by this protein. Required for spermatogenesis. Involved in acrosome biogenesis, probably by regulating cofilin-mediated actin cytoskeleton remodeling during proacrosomal vesicle fusion and/or Golgi to perinuclear vesicle trafficking. This Homo sapiens (Human) protein is Protein phosphatase Slingshot homolog 2 (SSH2).